The following is a 180-amino-acid chain: ATP-dependent protease subunit HslV (180 aa).

Residue T2 is part of the active site. Residues G157, C160, and S163 each coordinate Na(+).

Belongs to the peptidase T1B family. HslV subfamily. As to quaternary structure, a double ring-shaped homohexamer of HslV is capped on each side by a ring-shaped HslU homohexamer. The assembly of the HslU/HslV complex is dependent on binding of ATP.

It is found in the cytoplasm. The enzyme catalyses ATP-dependent cleavage of peptide bonds with broad specificity.. Allosterically activated by HslU binding. Functionally, protease subunit of a proteasome-like degradation complex believed to be a general protein degrading machinery. This is ATP-dependent protease subunit HslV from Wigglesworthia glossinidia brevipalpis.